A 253-amino-acid polypeptide reads, in one-letter code: Ubiquinone biosynthesis O-methyltransferase (253 aa).

S-adenosyl-L-methionine contacts are provided by arginine 45, glycine 76, aspartate 97, and methionine 140.

This sequence belongs to the methyltransferase superfamily. UbiG/COQ3 family.

The enzyme catalyses a 3-demethylubiquinol + S-adenosyl-L-methionine = a ubiquinol + S-adenosyl-L-homocysteine + H(+). It catalyses the reaction a 3-(all-trans-polyprenyl)benzene-1,2-diol + S-adenosyl-L-methionine = a 2-methoxy-6-(all-trans-polyprenyl)phenol + S-adenosyl-L-homocysteine + H(+). It functions in the pathway cofactor biosynthesis; ubiquinone biosynthesis. Its function is as follows. O-methyltransferase that catalyzes the 2 O-methylation steps in the ubiquinone biosynthetic pathway. This Parvibaculum lavamentivorans (strain DS-1 / DSM 13023 / NCIMB 13966) protein is Ubiquinone biosynthesis O-methyltransferase.